We begin with the raw amino-acid sequence, 260 residues long: Magnesium dechelatase SGRL, chloroplastic (260 aa).

The transit peptide at methionine 1–arginine 45 directs the protein to the chloroplast.

Belongs to the staygreen family. Interacts with the light harvesting complex II (LHCII). Interacts with the chlorophyll catabolic enzymes (CCEs) NYC1, NOL, PAO and RCCR. As to expression, expressed in cotyledons, pollen and young leaves.

Its subcellular location is the plastid. The protein resides in the chloroplast thylakoid. It catalyses the reaction chlorophyllide a + 2 H(+) = pheophorbide a + Mg(2+). In terms of biological role, magnesium chelatase involved in chlorophyll a degradation in the chlorophyll-protein complexes of photosystem I (PSI) and photosystem II (PSII). Contributes to the degradation of PSI and PSII in the thylakoid membranes. Recombinant SGRL possesses high dechelating activity against chlorophyllide a, very low activity against chlorophyll a, and no activity against chlorophyll b. Contributes to abiotic stress-induced chlorophyll degradation and leaf yellowing during vegetative plant growth. The protein is Magnesium dechelatase SGRL, chloroplastic of Arabidopsis thaliana (Mouse-ear cress).